Reading from the N-terminus, the 156-residue chain is Peptidyl-prolyl cis-trans isomerase cypE (156 aa).

A PPIase cyclophilin-type domain is found at 2–155; it reads TEQTVTLQTT…DEIRIIKATA (154 aa).

It belongs to the cyclophilin-type PPIase family. In terms of assembly, interacts with snwA.

The protein localises to the cytoplasm. The protein resides in the nucleus. The enzyme catalyses [protein]-peptidylproline (omega=180) = [protein]-peptidylproline (omega=0). Its function is as follows. Catalyzes the cis-trans isomerization of proline imidic peptide bonds in oligopeptides. Plays a role in protein folding, transport and assembly. In Dictyostelium discoideum (Social amoeba), this protein is Peptidyl-prolyl cis-trans isomerase cypE (cypE).